We begin with the raw amino-acid sequence, 86 residues long: Small ribosomal subunit protein uS17 (86 aa).

Belongs to the universal ribosomal protein uS17 family. Part of the 30S ribosomal subunit.

In terms of biological role, one of the primary rRNA binding proteins, it binds specifically to the 5'-end of 16S ribosomal RNA. This Marinomonas sp. (strain MWYL1) protein is Small ribosomal subunit protein uS17.